Here is a 270-residue protein sequence, read N- to C-terminus: Orotidine 5'-phosphate decarboxylase (270 aa).

Lys95 serves as the catalytic Proton donor.

It belongs to the OMP decarboxylase family. Type 2 subfamily.

The enzyme catalyses orotidine 5'-phosphate + H(+) = UMP + CO2. It functions in the pathway pyrimidine metabolism; UMP biosynthesis via de novo pathway; UMP from orotate: step 2/2. This Dechloromonas aromatica (strain RCB) protein is Orotidine 5'-phosphate decarboxylase.